A 95-amino-acid chain; its full sequence is Putative monooxygenase YcnE (95 aa).

An ABM domain is found at 2–93; it reads IVLQAYIKVK…APLDVVRTEL (92 aa). Serine 24 is modified (phosphoserine).

Belongs to the LsrG family.

In terms of biological role, putative monooxygenase that may contribute to the degradation of aromatic compounds. This Bacillus subtilis (strain 168) protein is Putative monooxygenase YcnE (ycnE).